We begin with the raw amino-acid sequence, 180 residues long: MVDENNLIWIDLEMTGLNPDHDRIIEIATLVTDANLNVLAEGPVLAVHQSDSQLALMDDWNVRTHGASGLTDRVKVSTADERAAELETLAFLQKWVPAGKSPICGNSIGQDRRFLFRYMPELEAYFHYRYLDVSTLKELARRWKPEIMAGFKKQGTHQAMDDIRESLAELVYYRENFLRL.

Residues 7 to 170 (LIWIDLEMTG…DDIRESLAEL (164 aa)) form the Exonuclease domain. Tyr-128 is a catalytic residue.

This sequence belongs to the oligoribonuclease family.

Its subcellular location is the cytoplasm. Functionally, 3'-to-5' exoribonuclease specific for small oligoribonucleotides. This is Oligoribonuclease from Pectobacterium atrosepticum (strain SCRI 1043 / ATCC BAA-672) (Erwinia carotovora subsp. atroseptica).